Here is a 667-residue protein sequence, read N- to C-terminus: tRNA 5-methylaminomethyl-2-thiouridine biosynthesis bifunctional protein MnmC (667 aa).

The tract at residues 1–215 (MKFINGILFN…KREMIRAYFN (215 aa)) is tRNA (mnm(5)s(2)U34)-methyltransferase. The FAD-dependent cmnm(5)s(2)U34 oxidoreductase stretch occupies residues 240-667 (IGAGIAGIVT…LIRKLKKGLK (428 aa)).

The protein in the N-terminal section; belongs to the methyltransferase superfamily. tRNA (mnm(5)s(2)U34)-methyltransferase family. In the C-terminal section; belongs to the DAO family. Requires FAD as cofactor.

Its subcellular location is the cytoplasm. It catalyses the reaction 5-aminomethyl-2-thiouridine(34) in tRNA + S-adenosyl-L-methionine = 5-methylaminomethyl-2-thiouridine(34) in tRNA + S-adenosyl-L-homocysteine + H(+). In terms of biological role, catalyzes the last two steps in the biosynthesis of 5-methylaminomethyl-2-thiouridine (mnm(5)s(2)U) at the wobble position (U34) in tRNA. Catalyzes the FAD-dependent demodification of cmnm(5)s(2)U34 to nm(5)s(2)U34, followed by the transfer of a methyl group from S-adenosyl-L-methionine to nm(5)s(2)U34, to form mnm(5)s(2)U34. This Campylobacter hominis (strain ATCC BAA-381 / DSM 21671 / CCUG 45161 / LMG 19568 / NCTC 13146 / CH001A) protein is tRNA 5-methylaminomethyl-2-thiouridine biosynthesis bifunctional protein MnmC.